We begin with the raw amino-acid sequence, 262 residues long: 5'-nucleotidase SurE (262 aa).

Residues Asp8, Asp9, Ser39, and Asn95 each coordinate a divalent metal cation.

Belongs to the SurE nucleotidase family. A divalent metal cation is required as a cofactor.

The protein resides in the cytoplasm. It catalyses the reaction a ribonucleoside 5'-phosphate + H2O = a ribonucleoside + phosphate. Nucleotidase that shows phosphatase activity on nucleoside 5'-monophosphates. The sequence is that of 5'-nucleotidase SurE from Methanothermobacter thermautotrophicus (strain ATCC 29096 / DSM 1053 / JCM 10044 / NBRC 100330 / Delta H) (Methanobacterium thermoautotrophicum).